A 367-amino-acid polypeptide reads, in one-letter code: MSSRRSVGDPEYLTRRIPQNPRYQHIKTRLDTGSSLTKYIEKLEEIKRNYRYRKDELFKRLKVTTFAQLVVQVASLSDETLEVTNEEIHKLEGGNSPASDADAELTAGTNGKGSPNGTPPSPVLFINNAGAGESYRSTLQSLISGVGELDIEKDTHKKADTQAKDTPYPDCPFLLLDVRDRDAYDQCHIVGAYSYPIAMLSRAMNPYTNSILEYKNAHGKIIILYDDDERLASQAATTMCERGFENLFMLSGGLKVLAQKVPEGLITGSLPISCQVAAPTGSARKKPVPKVPPTRAESKWRYSAEDLQKIKYYLEEEQLPSDTASRLSRGSSGRDSKATTARSSPSLPSTAGSRMLSRSSIQNRPWK.

Residues 89-121 (HKLEGGNSPASDADAELTAGTNGKGSPNGTPPS) are disordered. Over residues 107–116 (AGTNGKGSPN) the composition is skewed to polar residues. Residues 169–266 (PDCPFLLLDV…LAQKVPEGLI (98 aa)) enclose the Rhodanese domain. The interval 319-367 (LPSDTASRLSRGSSGRDSKATTARSSPSLPSTAGSRMLSRSSIQNRPWK) is disordered. Residues 338–367 (ATTARSSPSLPSTAGSRMLSRSSIQNRPWK) are compositionally biased toward polar residues.

The protein belongs to the CEP41 family.

Its subcellular location is the cytoplasm. It localises to the cytoskeleton. The protein resides in the microtubule organizing center. It is found in the centrosome. The protein localises to the cell projection. Its subcellular location is the cilium. It localises to the cilium basal body. In terms of biological role, required during ciliogenesis for tubulin glutamylation in cilium. Probably acts by participating in the transport of tubulin polyglutamylases between the basal body and the cilium. This Gallus gallus (Chicken) protein is Centrosomal protein of 41 kDa (CEP41).